A 651-amino-acid polypeptide reads, in one-letter code: Acetyl-coenzyme A synthetase (651 aa).

CoA is bound by residues 190-193 (RGGK), T312, and N336. Residues 388-390 (GEP), 412-417 (DTWWQT), D501, and R516 each bind ATP. S524 contributes to the CoA binding site. ATP is bound at residue R527. 3 residues coordinate Mg(2+): V538, H540, and V543. Position 585 (R585) interacts with CoA. K610 carries the post-translational modification N6-acetyllysine.

This sequence belongs to the ATP-dependent AMP-binding enzyme family. Mg(2+) serves as cofactor. Post-translationally, acetylated. Deacetylation by the SIR2-homolog deacetylase activates the enzyme.

It catalyses the reaction acetate + ATP + CoA = acetyl-CoA + AMP + diphosphate. Its function is as follows. Catalyzes the conversion of acetate into acetyl-CoA (AcCoA), an essential intermediate at the junction of anabolic and catabolic pathways. AcsA undergoes a two-step reaction. In the first half reaction, AcsA combines acetate with ATP to form acetyl-adenylate (AcAMP) intermediate. In the second half reaction, it can then transfer the acetyl group from AcAMP to the sulfhydryl group of CoA, forming the product AcCoA. The protein is Acetyl-coenzyme A synthetase of Mesorhizobium japonicum (strain LMG 29417 / CECT 9101 / MAFF 303099) (Mesorhizobium loti (strain MAFF 303099)).